Here is a 323-residue protein sequence, read N- to C-terminus: uncharacterized protein (323 aa).

Residues 1 to 21 form a disordered region; sequence MGSYYSTESTKSNESNETTNN. Gly-2 is lipidated: N-myristoyl glycine; by host.

This is an uncharacterized protein from Acanthamoeba polyphaga (Amoeba).